A 621-amino-acid chain; its full sequence is Auxin response factor 13 (621 aa).

Positions 124 to 228 (FSKILTASDV…ELRFGIRRAK (105 aa)) form a DNA-binding region, TF-B3. Residues 508–600 (RSRIKVHMQG…EIKKMKLKNK (93 aa)) enclose the PB1 domain.

This sequence belongs to the ARF family. In terms of assembly, homodimers and heterodimers.

The protein resides in the nucleus. Its function is as follows. Auxin response factors (ARFs) are transcriptional factors that bind specifically to the DNA sequence 5'-TGTCTC-3' found in the auxin-responsive promoter elements (AuxREs). Could act as transcriptional activator or repressor. Formation of heterodimers with Aux/IAA proteins may alter their ability to modulate early auxin response genes expression. In Arabidopsis thaliana (Mouse-ear cress), this protein is Auxin response factor 13 (ARF13).